Consider the following 134-residue polypeptide: MTKDQNGTWEMESNENFEGYMKALDIDFATRKIAVRLTQTKIITQDGDNFKTKTNSTFRNYDLDFTVGVEFDEHTKGLDGRHVKTLVTWEGNTLVCVQKGEKENRGWKQWVEGDKLYLELTCGDQVCRQVFKKK.

Positions 41 and 109 each coordinate all-trans-retinol.

This sequence belongs to the calycin superfamily. Fatty-acid binding protein (FABP) family. As to expression, expressed in prenatal liver, intestine and lung, and in adult intestine.

Its subcellular location is the cytoplasm. Intracellular transport of retinol. In Mus musculus (Mouse), this protein is Retinol-binding protein 2 (Rbp2).